The sequence spans 266 residues: 3-methyl-2-oxobutanoate hydroxymethyltransferase (266 aa).

Mg(2+)-binding residues include D47 and D86. 3-methyl-2-oxobutanoate-binding positions include D47–S48, D86, and K114. Position 116 (E116) interacts with Mg(2+). E183 acts as the Proton acceptor in catalysis.

It belongs to the PanB family. Homodecamer; pentamer of dimers. Mg(2+) is required as a cofactor.

It is found in the cytoplasm. The enzyme catalyses 3-methyl-2-oxobutanoate + (6R)-5,10-methylene-5,6,7,8-tetrahydrofolate + H2O = 2-dehydropantoate + (6S)-5,6,7,8-tetrahydrofolate. Its pathway is cofactor biosynthesis; (R)-pantothenate biosynthesis; (R)-pantoate from 3-methyl-2-oxobutanoate: step 1/2. Catalyzes the reversible reaction in which hydroxymethyl group from 5,10-methylenetetrahydrofolate is transferred onto alpha-ketoisovalerate to form ketopantoate. This chain is 3-methyl-2-oxobutanoate hydroxymethyltransferase, found in Idiomarina loihiensis (strain ATCC BAA-735 / DSM 15497 / L2-TR).